The chain runs to 530 residues: GMP synthase [glutamine-hydrolyzing] (530 aa).

Positions 4–205 constitute a Glutamine amidotransferase type-1 domain; sequence RILILDYGSQ…VKDICGCEGD (202 aa). Cys-84 serves as the catalytic Nucleophile. Active-site residues include His-179 and Glu-181. The GMPS ATP-PPase domain maps to 206 to 398; the sequence is WNMPDYISEA…LGLPPQMVYR (193 aa). 233–239 contacts ATP; it reads SGGVDSS.

As to quaternary structure, homodimer.

The catalysed reaction is XMP + L-glutamine + ATP + H2O = GMP + L-glutamate + AMP + diphosphate + 2 H(+). The protein operates within purine metabolism; GMP biosynthesis; GMP from XMP (L-Gln route): step 1/1. In terms of biological role, catalyzes the synthesis of GMP from XMP. In Bordetella bronchiseptica (strain ATCC BAA-588 / NCTC 13252 / RB50) (Alcaligenes bronchisepticus), this protein is GMP synthase [glutamine-hydrolyzing].